We begin with the raw amino-acid sequence, 337 residues long: ATP-dependent 6-phosphofructokinase (337 aa).

Gly-11 is an ATP binding site. 21 to 25 (RAVVR) lines the ADP pocket. Residues 72–73 (RY) and 102–105 (GDGS) each bind ATP. Asp-103 provides a ligand contact to Mg(2+). 125-127 (TID) serves as a coordination point for substrate. Asp-127 acts as the Proton acceptor in catalysis. Arg-154 lines the ADP pocket. Substrate-binding positions include Arg-162 and 169–171 (MGR). Residues 185-187 (GAD), Arg-212, and 214-216 (KNH) each bind ADP. Residues Glu-223, Arg-245, and 251–254 (HILR) each bind substrate.

Belongs to the phosphofructokinase type A (PFKA) family. ATP-dependent PFK group I subfamily. Prokaryotic clade 'B1' sub-subfamily. In terms of assembly, homotetramer. Mg(2+) serves as cofactor.

The protein resides in the cytoplasm. The enzyme catalyses beta-D-fructose 6-phosphate + ATP = beta-D-fructose 1,6-bisphosphate + ADP + H(+). It participates in carbohydrate degradation; glycolysis; D-glyceraldehyde 3-phosphate and glycerone phosphate from D-glucose: step 3/4. With respect to regulation, allosterically activated by ADP and other diphosphonucleosides, and allosterically inhibited by phosphoenolpyruvate. Its function is as follows. Catalyzes the phosphorylation of D-fructose 6-phosphate to fructose 1,6-bisphosphate by ATP, the first committing step of glycolysis. The polypeptide is ATP-dependent 6-phosphofructokinase (Streptococcus equi subsp. equi (strain 4047)).